The following is a 302-amino-acid chain: NADH-cytochrome b5 reductase 2 (302 aa).

Residues 1-41 (MFSRLSRSHSKALPIALGTVAIAAATAFYFANRNQHSFVFN) constitute a propeptide, removed in mature form. Residues 12-32 (ALPIALGTVAIAAATAFYFAN) form a helical membrane-spanning segment. The region spanning 51–155 (DKWIDLPISK…KGPIMKWKWQ (105 aa)) is the FAD-binding FR-type domain. An FAD-binding site is contributed by 158–193 (QFKSITLLGAGTGINPLYQLAHHIVENPNDKTKVNL). Phosphoserine is present on serine 278.

The protein belongs to the flavoprotein pyridine nucleotide cytochrome reductase family. FAD serves as cofactor. Post-translationally, there are two isoforms of NADH-cytochrome b5 reductase, a 34 kDa form (p34) and a 32 kDa form (p32). The p34 form becomes firmly anchored to the outer mitochondrial membrane after an incomplete translocation arrest. The p32 form is formed after translocation of the p34 precursor to the inner mitochondrial membrane, where it is processed by mitochondrial inner membrane peptidase (IMP) complex and released to the intermembrane space.

The protein resides in the mitochondrion intermembrane space. Its subcellular location is the mitochondrion outer membrane. The catalysed reaction is 2 Fe(III)-[cytochrome b5] + NADH = 2 Fe(II)-[cytochrome b5] + NAD(+) + H(+). Functionally, the outer membrane form may mediate the reduction of outer membrane cytochrome b5, and the soluble inter-membrane space form may transfer electrons from external NADH to cytochrome c, thereby mediating an antimycin-insensitive, energy-coupled oxidation of external NADH by yeast mitochondria. Involved in the reduction of D-erythroascorbyl free radicals. The sequence is that of NADH-cytochrome b5 reductase 2 (MCR1) from Saccharomyces cerevisiae (strain YJM789) (Baker's yeast).